We begin with the raw amino-acid sequence, 148 residues long: Large ribosomal subunit protein bL28c (148 aa).

A chloroplast-targeting transit peptide spans 1–71 (MAASGMLISN…PLKPSLQPVA (71 aa)).

Component of the chloroplast large ribosomal subunit (LSU). Mature 70S chloroplast ribosomes of higher plants consist of a small (30S) and a large (50S) subunit. The 30S small subunit contains 1 molecule of ribosomal RNA (16S rRNA) and 24 different proteins. The 50S large subunit contains 3 rRNA molecules (23S, 5S and 4.5S rRNA) and 33 different proteins.

Its subcellular location is the plastid. The protein resides in the chloroplast. Component of the chloroplast ribosome (chloro-ribosome), a dedicated translation machinery responsible for the synthesis of chloroplast genome-encoded proteins, including proteins of the transcription and translation machinery and components of the photosynthetic apparatus. This is Large ribosomal subunit protein bL28c (RPL28) from Spinacia oleracea (Spinach).